The chain runs to 407 residues: Imidazolonepropionase (407 aa).

The Fe(3+) site is built by His68 and His70. Zn(2+) is bound by residues His68 and His70. Arg77, Tyr140, and His173 together coordinate 4-imidazolone-5-propanoate. Tyr140 contacts N-formimidoyl-L-glutamate. His238 is a Fe(3+) binding site. A Zn(2+)-binding site is contributed by His238. Gln241 is a binding site for 4-imidazolone-5-propanoate. A Fe(3+)-binding site is contributed by Asp313. Asp313 is a Zn(2+) binding site. Positions 315 and 317 each coordinate N-formimidoyl-L-glutamate. Thr318 is a 4-imidazolone-5-propanoate binding site.

The protein belongs to the metallo-dependent hydrolases superfamily. HutI family. Requires Zn(2+) as cofactor. It depends on Fe(3+) as a cofactor.

It localises to the cytoplasm. The enzyme catalyses 4-imidazolone-5-propanoate + H2O = N-formimidoyl-L-glutamate. It functions in the pathway amino-acid degradation; L-histidine degradation into L-glutamate; N-formimidoyl-L-glutamate from L-histidine: step 3/3. In terms of biological role, catalyzes the hydrolytic cleavage of the carbon-nitrogen bond in imidazolone-5-propanoate to yield N-formimidoyl-L-glutamate. It is the third step in the universal histidine degradation pathway. This is Imidazolonepropionase from Burkholderia mallei (strain ATCC 23344).